The following is a 258-amino-acid chain: Global transcriptional regulator CodY (258 aa).

Residues 1-156 (MSSLLTKTRM…SATIVGMEML (156 aa)) are GAF domain. The segment at residues 204–223 (ASKIADKVGITRSVIVNALR) is a DNA-binding region (H-T-H motif).

It belongs to the CodY family.

It is found in the cytoplasm. Its function is as follows. DNA-binding global transcriptional regulator which is involved in the adaptive response to starvation and acts by directly or indirectly controlling the expression of numerous genes in response to nutrient availability. During rapid exponential growth, CodY is highly active and represses genes whose products allow adaptation to nutrient depletion. This is Global transcriptional regulator CodY from Clostridium beijerinckii (strain ATCC 51743 / NCIMB 8052) (Clostridium acetobutylicum).